A 389-amino-acid chain; its full sequence is S-adenosylmethionine synthase (389 aa).

An ATP-binding site is contributed by H16. D18 serves as a coordination point for Mg(2+). E44 is a binding site for K(+). E57 and Q100 together coordinate L-methionine. A flexible loop region spans residues 100 to 110 (QSPDIAQGVDE). ATP contacts are provided by residues 167–169 (DAK), 233–234 (RF), D242, 248–249 (RK), A265, and K269. D242 serves as a coordination point for L-methionine. K273 provides a ligand contact to L-methionine.

The protein belongs to the AdoMet synthase family. Homotetramer; dimer of dimers. Requires Mg(2+) as cofactor. It depends on K(+) as a cofactor.

Its subcellular location is the cytoplasm. The catalysed reaction is L-methionine + ATP + H2O = S-adenosyl-L-methionine + phosphate + diphosphate. Its pathway is amino-acid biosynthesis; S-adenosyl-L-methionine biosynthesis; S-adenosyl-L-methionine from L-methionine: step 1/1. Its function is as follows. Catalyzes the formation of S-adenosylmethionine (AdoMet) from methionine and ATP. The overall synthetic reaction is composed of two sequential steps, AdoMet formation and the subsequent tripolyphosphate hydrolysis which occurs prior to release of AdoMet from the enzyme. This is S-adenosylmethionine synthase from Acidithiobacillus ferrooxidans (strain ATCC 23270 / DSM 14882 / CIP 104768 / NCIMB 8455) (Ferrobacillus ferrooxidans (strain ATCC 23270)).